The chain runs to 276 residues: Large ribosomal subunit protein uL2 (276 aa).

A disordered region spans residues 218–276 (PYVRGSAMNPVDHPHGGGEGRAPIGRPAPSTPWGKPALGLKTRKKNKKSNKYIVRRRKK). Positions 258-276 (KTRKKNKKSNKYIVRRRKK) are enriched in basic residues.

It belongs to the universal ribosomal protein uL2 family. Part of the 50S ribosomal subunit. Forms a bridge to the 30S subunit in the 70S ribosome.

Functionally, one of the primary rRNA binding proteins. Required for association of the 30S and 50S subunits to form the 70S ribosome, for tRNA binding and peptide bond formation. It has been suggested to have peptidyltransferase activity; this is somewhat controversial. Makes several contacts with the 16S rRNA in the 70S ribosome. In Finegoldia magna (strain ATCC 29328 / DSM 20472 / WAL 2508) (Peptostreptococcus magnus), this protein is Large ribosomal subunit protein uL2.